Consider the following 557-residue polypeptide: Aerobic glycerol-3-phosphate dehydrogenase (557 aa).

21–49 is a binding site for FAD; it reads DVVIIGGGITGAGIALDASERGMKVALVE.

The protein belongs to the FAD-dependent glycerol-3-phosphate dehydrogenase family. Requires FAD as cofactor.

It localises to the cytoplasm. It carries out the reaction a quinone + sn-glycerol 3-phosphate = dihydroxyacetone phosphate + a quinol. The protein operates within polyol metabolism; glycerol degradation via glycerol kinase pathway; glycerone phosphate from sn-glycerol 3-phosphate (aerobic route): step 1/1. The chain is Aerobic glycerol-3-phosphate dehydrogenase (glpD) from Staphylococcus saprophyticus subsp. saprophyticus (strain ATCC 15305 / DSM 20229 / NCIMB 8711 / NCTC 7292 / S-41).